The sequence spans 397 residues: Enoyl-[acyl-carrier-protein] reductase [NADH] (397 aa).

Residues 48-53 (GASTGY), 74-75 (FE), 111-112 (DA), and 139-140 (LA) contribute to the NAD(+) site. Tyrosine 225 is a substrate binding site. Tyrosine 235 functions as the Proton donor in the catalytic mechanism. Residues lysine 244 and 273–275 (VVT) contribute to the NAD(+) site.

It belongs to the TER reductase family. As to quaternary structure, monomer.

The catalysed reaction is a 2,3-saturated acyl-[ACP] + NAD(+) = a (2E)-enoyl-[ACP] + NADH + H(+). It functions in the pathway lipid metabolism; fatty acid biosynthesis. Involved in the final reduction of the elongation cycle of fatty acid synthesis (FAS II). Catalyzes the reduction of a carbon-carbon double bond in an enoyl moiety that is covalently linked to an acyl carrier protein (ACP). The polypeptide is Enoyl-[acyl-carrier-protein] reductase [NADH] (Edwardsiella ictaluri (strain 93-146)).